Reading from the N-terminus, the 370-residue chain is Putative phosphoserine aminotransferase (370 aa).

The segment at 1 to 22 (MAELTIPADLKPRDGRFGSGPS) is disordered. Position 44 (arginine 44) interacts with L-glutamate. Pyridoxal 5'-phosphate contacts are provided by phenylalanine 102, threonine 148, aspartate 170, and glutamine 193. Lysine 194 bears the N6-(pyridoxal phosphate)lysine mark. Pyridoxal 5'-phosphate is bound at residue 245 to 246 (NT).

Belongs to the class-V pyridoxal-phosphate-dependent aminotransferase family. SerC subfamily. In terms of assembly, homodimer. It depends on pyridoxal 5'-phosphate as a cofactor.

The protein localises to the cytoplasm. It carries out the reaction O-phospho-L-serine + 2-oxoglutarate = 3-phosphooxypyruvate + L-glutamate. The enzyme catalyses 4-(phosphooxy)-L-threonine + 2-oxoglutarate = (R)-3-hydroxy-2-oxo-4-phosphooxybutanoate + L-glutamate. It participates in amino-acid biosynthesis; L-serine biosynthesis; L-serine from 3-phospho-D-glycerate: step 2/3. Its pathway is cofactor biosynthesis; pyridoxine 5'-phosphate biosynthesis; pyridoxine 5'-phosphate from D-erythrose 4-phosphate: step 3/5. Catalyzes the reversible conversion of 3-phosphohydroxypyruvate to phosphoserine and of 3-hydroxy-2-oxo-4-phosphonooxybutanoate to phosphohydroxythreonine. This Mycobacterium sp. (strain JLS) protein is Putative phosphoserine aminotransferase.